The sequence spans 291 residues: 33 kDa chaperonin (291 aa).

Intrachain disulfides connect Cys-235–Cys-237 and Cys-268–Cys-271.

This sequence belongs to the HSP33 family. In terms of processing, under oxidizing conditions two disulfide bonds are formed involving the reactive cysteines. Under reducing conditions zinc is bound to the reactive cysteines and the protein is inactive.

Its subcellular location is the cytoplasm. In terms of biological role, redox regulated molecular chaperone. Protects both thermally unfolding and oxidatively damaged proteins from irreversible aggregation. Plays an important role in the bacterial defense system toward oxidative stress. The chain is 33 kDa chaperonin from Streptococcus agalactiae serotype III (strain NEM316).